The sequence spans 504 residues: Deoxyguanosinetriphosphate triphosphohydrolase (504 aa).

An HD domain is found at 66-273 (RLTHSLEVQQ…MEAADDISYC (208 aa)).

It belongs to the dGTPase family. Type 1 subfamily. Homotetramer. Mg(2+) is required as a cofactor.

The catalysed reaction is dGTP + H2O = 2'-deoxyguanosine + triphosphate + H(+). Functionally, dGTPase preferentially hydrolyzes dGTP over the other canonical NTPs. This chain is Deoxyguanosinetriphosphate triphosphohydrolase, found in Klebsiella pneumoniae (strain 342).